A 100-amino-acid chain; its full sequence is Urease subunit gamma (100 aa).

This sequence belongs to the urease gamma subunit family. In terms of assembly, heterotrimer of UreA (gamma), UreB (beta) and UreC (alpha) subunits. Three heterotrimers associate to form the active enzyme.

The protein localises to the cytoplasm. It carries out the reaction urea + 2 H2O + H(+) = hydrogencarbonate + 2 NH4(+). The protein operates within nitrogen metabolism; urea degradation; CO(2) and NH(3) from urea (urease route): step 1/1. This chain is Urease subunit gamma, found in Cupriavidus pinatubonensis (strain JMP 134 / LMG 1197) (Cupriavidus necator (strain JMP 134)).